Consider the following 295-residue polypeptide: MSLKHFIQITKPGIIFGNVLSVAGGFFLASKGNIDFGVFLAAVIGTSLVVASGCVFNNCIDRDIDQRMERTRNRVLVQGLVSLKLALLYATLLGIAGVGLLYTEANPLAALFAVIGFVIYVGLYSLYLKRRSVHGTLVGSLSGAMPPVIGYCAVSNSFDFAALTLLVMFSLWQMPHSYAIAIFRFNDYRAAKIPVLPVKRGILVTKRHIMLYILAFLVATLMLTVGGYAGLNYLAVAAGMGMYWLYMAWKGYKAVDDTVWARKLFVFSIFTITALSVMMSVDFQVTKELLVTYAF.

Transmembrane regions (helical) follow at residues 9 to 29, 36 to 56, 80 to 100, 108 to 128, 135 to 155, 163 to 183, 209 to 229, 230 to 250, and 265 to 285; these read ITKPGIIFGNVLSVAGGFFLA, FGVFLAAVIGTSLVVASGCVF, LVSLKLALLYATLLGIAGVGL, LAALFAVIGFVIYVGLYSLYL, GTLVGSLSGAMPPVIGYCAVS, LTLLVMFSLWQMPHSYAIAIF, IMLYILAFLVATLMLTVGGYA, GLNYLAVAAGMGMYWLYMAWK, and FVFSIFTITALSVMMSVDFQV.

This sequence belongs to the UbiA prenyltransferase family. Protoheme IX farnesyltransferase subfamily.

It localises to the cell inner membrane. The catalysed reaction is heme b + (2E,6E)-farnesyl diphosphate + H2O = Fe(II)-heme o + diphosphate. It participates in porphyrin-containing compound metabolism; heme O biosynthesis; heme O from protoheme: step 1/1. Functionally, converts heme B (protoheme IX) to heme O by substitution of the vinyl group on carbon 2 of heme B porphyrin ring with a hydroxyethyl farnesyl side group. This chain is Protoheme IX farnesyltransferase, found in Pseudomonas syringae pv. syringae (strain B728a).